A 440-amino-acid polypeptide reads, in one-letter code: Chromosome partition protein MukF (440 aa).

Residues 208-236 form a leucine-zipper region; sequence LSETSGTLRELQDTLEAAGDKLQANLLRI.

Belongs to the MukF family. In terms of assembly, interacts, and probably forms a ternary complex, with MukE and MukB via its C-terminal region. The complex formation is stimulated by calcium or magnesium. It is required for an interaction between MukE and MukB.

It is found in the cytoplasm. The protein resides in the nucleoid. Its function is as follows. Involved in chromosome condensation, segregation and cell cycle progression. May participate in facilitating chromosome segregation by condensation DNA from both sides of a centrally located replisome during cell division. Not required for mini-F plasmid partitioning. Probably acts via its interaction with MukB and MukE. Overexpression results in anucleate cells. It has a calcium binding activity. In Escherichia coli (strain ATCC 8739 / DSM 1576 / NBRC 3972 / NCIMB 8545 / WDCM 00012 / Crooks), this protein is Chromosome partition protein MukF.